We begin with the raw amino-acid sequence, 284 residues long: uncharacterized protein (284 aa).

Residues 1 to 24 (MLYSRESRTTVLFLALVTSLTVLC) form the signal peptide. Residues 25–84 (HSVDVTTVFTTSTITEITTVTAAPQPQNKAETALNTATNIIQTMQFLFNCAPFKWKGPLK) are Cytoplasmic-facing. A helical transmembrane segment spans residues 85 to 104 (ITSCALNFIVLLLTAWGYLL). At 105 to 284 (KYLQENKLNS…SVHMYSSSLL (180 aa)) the chain is on the extracellular side. N-linked (GlcNAc...) asparagine glycosylation is present at N270.

It to yeast YNL033w.

Its subcellular location is the cell membrane. This is an uncharacterized protein from Saccharomyces cerevisiae (strain ATCC 204508 / S288c) (Baker's yeast).